The sequence spans 674 residues: MNFLYNNSDYSSTSHTMKSPSAYNQFPKLQASNSTAGNNNTATTATAAAAAASASASASVTPQLISPTTLTTPQNKYKRGGLDNTLPKIETTRKNRPDDGNSITPSNSINSGTTKLTLPPRRVWVKKPQTNNPTTVLCYVNDIIDDLKVAVVNKYPNTIGRYEDAADLLVKIDLNNIRVPVSPSVNRVSQRTPFDNCIILEPDQNVWQILDNYFPNGMAMHDALIIETPTFKPDHQMLTPITANMNNNSNTFIPFQERQSSIGNNNNNNSNVNNNNKAQAVKHPQPMQPNNTRVGLHKSYAMNRSSFSTNNNPVPSIIKDRSVSPSNLGVSRNSPVSHKRSYSNPVSSPNSVATQANNPSAVLLLPRNFSLANNNSNQASQSSGGTPAKKVLSEDGSKSVNDKTEEVVSSKLKPNDNNKSYQAKQQEQQTAEQSENGFSETSASPEAVHNSKAAPLPLTKSSTTATTTSSNSISNNNNTSSKGKPSQSKLKAANDPTPTDIVLPSISVLVVEDNAINQAILGAFLRKRKIHYQIAKNGQEAIDKWKKGGFHLVLMDIQLPVKSGIEATKEIRHLEKLNRIGVFHENEIGKNVIINEEDRLTSNTFRSPVIIVALTASSNSSVDKTNALTAGCNDYLTKPVNLVWLQNKITEWGCMQALIDFDGWKDKNRRLNKA.

Polar residues predominate over residues 66–75; it reads SPTTLTTPQN. 3 disordered regions span residues 66–115, 259–354, and 372–497; these read SPTT…GTTK, QSSI…SVAT, and ANNN…NDPT. The span at 90-99 shows a compositional bias: basic and acidic residues; that stretch reads ETTRKNRPDD. The span at 101 to 115 shows a compositional bias: polar residues; the sequence is NSITPSNSINSGTTK. The span at 264–276 shows a compositional bias: low complexity; it reads NNNNNNSNVNNNN. Polar residues-rich tracts occupy residues 302–314 and 323–336; these read MNRSSFSTNNNPV and VSPSNLGVSRNSPV. Low complexity-rich tracts occupy residues 343 to 352 and 372 to 383; these read SNPVSSPNSV and ANNNSNQASQSS. Basic and acidic residues predominate over residues 391 to 416; it reads VLSEDGSKSVNDKTEEVVSSKLKPND. Positions 422-433 are enriched in low complexity; sequence QAKQQEQQTAEQ. Positions 434–444 are enriched in polar residues; it reads SENGFSETSAS. Over residues 459 to 481 the composition is skewed to low complexity; that stretch reads TKSSTTATTTSSNSISNNNNTSS. Positions 507 to 653 constitute a Response regulatory domain; the sequence is SVLVVEDNAI…WLQNKITEWG (147 aa). 4-aspartylphosphate is present on aspartate 556.

This sequence belongs to the SSK1 family.

Functionally, final receptor of the SLN1-YPD1-SSK1 two-component regulatory system, which controls activity of the HOG1 pathway in response to oxidative stress and probably also to the osmolarity of the extracellular environment. Involved in cell wall biosynthesis, hyphal growth, and virulence. Regulates the expression of CHK1, as well as of a subset of genes whose functions are associated with cell wall biosynthesis and adaptation to oxidative stress. Provides at least partial adaptive functions for the survival following encounter with human neutrophils. In Candida albicans (strain SC5314 / ATCC MYA-2876) (Yeast), this protein is Oxidative stress response two-component system protein SSK1 (SSK1).